A 336-amino-acid chain; its full sequence is Delta(1)-pyrroline-2-carboxylate reductase (336 aa).

Ser-47 acts as the Charge relay system in catalysis. His-48 (proton donor) is an active-site residue. Arg-52 provides a ligand contact to substrate. Residue 120-124 (HFSAL) coordinates NADP(+). Substrate is bound at residue Thr-160. 178–180 (DFA) provides a ligand contact to NADP(+). Position 186 to 187 (186 to 187 (RG)) interacts with substrate. The Charge relay system role is filled by Asp-188. Residues 229-230 (HK) and 304-310 (RLPSQRR) contribute to the NADP(+) site.

The protein belongs to the LDH2/MDH2 oxidoreductase family. Homodimer.

It catalyses the reaction L-proline + NAD(+) = 1-pyrroline-2-carboxylate + NADH + H(+). The enzyme catalyses L-proline + NADP(+) = 1-pyrroline-2-carboxylate + NADPH + H(+). Its function is as follows. Catalyzes the reduction of Delta(1)-pyrroline-2-carboxylate (Pyr2C) to L-proline, using NADPH as the electron donor. May be involved in a degradation pathway that converts trans-3-hydroxy-L-proline (t3LHyp) to L-proline. This is Delta(1)-pyrroline-2-carboxylate reductase from Pseudomonas fluorescens (strain ATCC BAA-477 / NRRL B-23932 / Pf-5).